The primary structure comprises 122 residues: Large ribosomal subunit protein uL14 (122 aa).

This sequence belongs to the universal ribosomal protein uL14 family. As to quaternary structure, part of the 50S ribosomal subunit. Forms a cluster with proteins L3 and L19. In the 70S ribosome, L14 and L19 interact and together make contacts with the 16S rRNA in bridges B5 and B8.

Binds to 23S rRNA. Forms part of two intersubunit bridges in the 70S ribosome. In Lachnospira eligens (strain ATCC 27750 / DSM 3376 / VPI C15-48 / C15-B4) (Eubacterium eligens), this protein is Large ribosomal subunit protein uL14.